The chain runs to 97 residues: Essential MCU regulator, mitochondrial (97 aa).

Residues 1–35 constitute a mitochondrion transit peptide; the sequence is MIVPRLALPISLALQRVSRRVAEHPHNLRILQRHM. A helical transmembrane segment spans residues 53 to 73; it reads PFGLLAIFCAVIPGLFVGATI.

This sequence belongs to the SMDT1/EMRE family.

Its subcellular location is the mitochondrion inner membrane. Essential regulatory subunit of the mitochondrial calcium uniporter MCU channel, a protein that mediates calcium uptake into mitochondria. This Drosophila melanogaster (Fruit fly) protein is Essential MCU regulator, mitochondrial.